Reading from the N-terminus, the 428-residue chain is Dihydroorotase (428 aa).

His59 and His61 together coordinate Zn(2+). Substrate-binding positions include 61–63 (HLR) and Asn93. Asp151, His178, and His231 together coordinate Zn(2+). Asn277 contributes to the substrate binding site. Asp304 is a binding site for Zn(2+). Asp304 is a catalytic residue. Substrate-binding positions include His308 and 322–323 (FG).

It belongs to the metallo-dependent hydrolases superfamily. DHOase family. Class I DHOase subfamily. Requires Zn(2+) as cofactor.

The catalysed reaction is (S)-dihydroorotate + H2O = N-carbamoyl-L-aspartate + H(+). Its pathway is pyrimidine metabolism; UMP biosynthesis via de novo pathway; (S)-dihydroorotate from bicarbonate: step 3/3. In terms of biological role, catalyzes the reversible cyclization of carbamoyl aspartate to dihydroorotate. The sequence is that of Dihydroorotase from Bacillus cereus (strain G9842).